We begin with the raw amino-acid sequence, 376 residues long: NIF3-like protein 1 (376 aa).

N6-acetyllysine is present on Lys-108. The tract at residues 243 to 376 (LLLHTGMGRL…ETDRDPLRVV (134 aa)) is mediates interaction with COPS2. A Phosphothreonine modification is found at Thr-254. The residue at position 258 (Ser-258) is a Phosphoserine.

It belongs to the GTP cyclohydrolase I type 2/NIF3 family. As to quaternary structure, homodimer. Interacts with COPS2. Interacts with THOC7.

The protein resides in the cytoplasm. The protein localises to the nucleus. May function as a transcriptional corepressor through its interaction with COPS2, negatively regulating the expression of genes involved in neuronal differentiation. The polypeptide is NIF3-like protein 1 (Rattus norvegicus (Rat)).